A 469-amino-acid polypeptide reads, in one-letter code: 3-isopropylmalate dehydratase large subunit (469 aa).

C350, C410, and C413 together coordinate [4Fe-4S] cluster.

The protein belongs to the aconitase/IPM isomerase family. LeuC type 1 subfamily. In terms of assembly, heterodimer of LeuC and LeuD. [4Fe-4S] cluster is required as a cofactor.

It catalyses the reaction (2R,3S)-3-isopropylmalate = (2S)-2-isopropylmalate. It participates in amino-acid biosynthesis; L-leucine biosynthesis; L-leucine from 3-methyl-2-oxobutanoate: step 2/4. Functionally, catalyzes the isomerization between 2-isopropylmalate and 3-isopropylmalate, via the formation of 2-isopropylmaleate. This is 3-isopropylmalate dehydratase large subunit from Rhizobium etli (strain ATCC 51251 / DSM 11541 / JCM 21823 / NBRC 15573 / CFN 42).